The primary structure comprises 249 residues: Probable calcium-binding protein CML12 (249 aa).

Residues 1-24 (MQSQRERPREDRVHEETRGADHAH) show a composition bias toward basic and acidic residues. The interval 1–80 (MQSQRERPRE…RKGKAPATAE (80 aa)) is disordered. Low complexity predominate over residues 30 to 56 (AAAAASATATETATRTMSLHAGGVVVV). Basic and acidic residues predominate over residues 57 to 70 (DGKEKGKKEEGEGK). EF-hand domains follow at residues 91-126 (EQLR…LGLR), 128-163 (AAGD…LILG), 171-206 (VDQA…MGHP), and 207-242 (ICYA…SALD). Ca(2+) contacts are provided by aspartate 104, aspartate 106, aspartate 108, serine 110, glutamate 115, aspartate 141, aspartate 143, asparagine 145, threonine 147, glutamate 152, aspartate 184, aspartate 186, asparagine 188, glutamate 195, aspartate 220, aspartate 222, aspartate 224, and glutamate 231.

Functionally, potential calcium sensor. This chain is Probable calcium-binding protein CML12 (CML12), found in Oryza sativa subsp. japonica (Rice).